Consider the following 253-residue polypeptide: Triosephosphate isomerase (253 aa).

Asn9–Lys11 is a substrate binding site. His95 functions as the Electrophile in the catalytic mechanism. Glu167 acts as the Proton acceptor in catalysis. Residues Gly173, Ser213, and Gly234 to Gly235 each bind substrate. Phosphoserine is present on Ser213.

It belongs to the triosephosphate isomerase family. As to quaternary structure, homodimer.

The protein localises to the cytoplasm. The enzyme catalyses D-glyceraldehyde 3-phosphate = dihydroxyacetone phosphate. The protein operates within carbohydrate biosynthesis; gluconeogenesis. It functions in the pathway carbohydrate degradation; glycolysis; D-glyceraldehyde 3-phosphate from glycerone phosphate: step 1/1. Involved in the gluconeogenesis. Catalyzes stereospecifically the conversion of dihydroxyacetone phosphate (DHAP) to D-glyceraldehyde-3-phosphate (G3P). The sequence is that of Triosephosphate isomerase from Geobacillus kaustophilus (strain HTA426).